A 256-amino-acid chain; its full sequence is Probable S-methyl-5'-thioinosine phosphorylase (256 aa).

Phosphate contacts are provided by residues Thr-10 and 47–48; that span reads RH. Met-178 contributes to the substrate binding site. Thr-179 is a phosphate binding site. 202–204 contributes to the substrate binding site; that stretch reads NYA.

Belongs to the PNP/MTAP phosphorylase family. MTAP subfamily. As to quaternary structure, homotrimer.

The enzyme catalyses S-methyl-5'-thioinosine + phosphate = 5-(methylsulfanyl)-alpha-D-ribose 1-phosphate + hypoxanthine. It participates in purine metabolism; purine nucleoside salvage. Catalyzes the reversible phosphorylation of S-methyl-5'-thioinosine (MTI) to hypoxanthine and 5-methylthioribose-1-phosphate. Involved in the breakdown of S-methyl-5'-thioadenosine (MTA), a major by-product of polyamine biosynthesis. Catabolism of (MTA) occurs via deamination to MTI and phosphorolysis to hypoxanthine. This is Probable S-methyl-5'-thioinosine phosphorylase from Methanopyrus kandleri (strain AV19 / DSM 6324 / JCM 9639 / NBRC 100938).